A 120-amino-acid chain; its full sequence is NAD(P)H-quinone oxidoreductase subunit 3, chloroplastic (120 aa).

The next 3 helical transmembrane spans lie at Phe9–Gly29, Met64–Met84, and Val88–Leu108.

This sequence belongs to the complex I subunit 3 family. As to quaternary structure, NDH is composed of at least 16 different subunits, 5 of which are encoded in the nucleus.

Its subcellular location is the plastid. It is found in the chloroplast thylakoid membrane. The catalysed reaction is a plastoquinone + NADH + (n+1) H(+)(in) = a plastoquinol + NAD(+) + n H(+)(out). It carries out the reaction a plastoquinone + NADPH + (n+1) H(+)(in) = a plastoquinol + NADP(+) + n H(+)(out). Its function is as follows. NDH shuttles electrons from NAD(P)H:plastoquinone, via FMN and iron-sulfur (Fe-S) centers, to quinones in the photosynthetic chain and possibly in a chloroplast respiratory chain. The immediate electron acceptor for the enzyme in this species is believed to be plastoquinone. Couples the redox reaction to proton translocation, and thus conserves the redox energy in a proton gradient. In Nicotiana tabacum (Common tobacco), this protein is NAD(P)H-quinone oxidoreductase subunit 3, chloroplastic.